Consider the following 119-residue polypeptide: Beta-2-microglobulin (119 aa).

Residues 1–20 form the signal peptide; the sequence is MARLVVVALLVLLCLSGLEA. Residues 25–114 form the Ig-like C1-type domain; that stretch reads PKIQVYSRHP…VTFTAPKTVK (90 aa). Cysteines 45 and 100 form a disulfide.

The protein belongs to the beta-2-microglobulin family. In terms of assembly, heterodimer of an alpha chain and a beta chain. Beta-2-microglobulin is the beta-chain of major histocompatibility complex class I molecules.

It localises to the secreted. Its function is as follows. Component of the class I major histocompatibility complex (MHC). Involved in the presentation of peptide antigens to the immune system. This Chiropotes satanas (Brown-bearded saki) protein is Beta-2-microglobulin (B2M).